Here is a 134-residue protein sequence, read N- to C-terminus: Major capsid protein (134 aa).

As to quaternary structure, homodimer.

The protein resides in the virion. Its function is as follows. Self-assembles to form a helical, filamentous nucleocapsid. The capsid proteins wrap around the DNA and maintain it in an A-form by non-specific desolvation and specific coordination of the DNA phosphate groups by positively charged residues. This certainly protects the viral DNA under conditions such as the extreme desiccation of its host. The chain is Major capsid protein from Saccharolobus solfataricus rod-shaped virus 1 (SSRV1).